Here is a 453-residue protein sequence, read N- to C-terminus: Bifunctional protein GlmU (453 aa).

The segment at 1–226 is pyrophosphorylase; the sequence is MKFSAVILAA…PIEVEGVNDR (226 aa). Residues 8–11, Lys22, Gln73, 78–79, 100–102, Gly137, Glu151, Asn166, and Asn224 each bind UDP-N-acetyl-alpha-D-glucosamine; these read LAAG, GT, and YGD. Mg(2+) is bound at residue Asp102. Asn224 lines the Mg(2+) pocket. Positions 227 to 247 are linker; it reads AQLARLERAFQAAQAKKLLEQ. Residues 248–453 form an N-acetyltransferase region; that stretch reads GVMLRDPARF…TGWQRPVKKK (206 aa). Arg330 and Lys348 together coordinate UDP-N-acetyl-alpha-D-glucosamine. His360 functions as the Proton acceptor in the catalytic mechanism. The UDP-N-acetyl-alpha-D-glucosamine site is built by Tyr363 and Asn374. Residues Ala377, 383–384, Ser402, Ala420, and Arg437 each bind acetyl-CoA; that span reads NY.

In the N-terminal section; belongs to the N-acetylglucosamine-1-phosphate uridyltransferase family. The protein in the C-terminal section; belongs to the transferase hexapeptide repeat family. As to quaternary structure, homotrimer. Mg(2+) serves as cofactor.

Its subcellular location is the cytoplasm. It carries out the reaction alpha-D-glucosamine 1-phosphate + acetyl-CoA = N-acetyl-alpha-D-glucosamine 1-phosphate + CoA + H(+). It catalyses the reaction N-acetyl-alpha-D-glucosamine 1-phosphate + UTP + H(+) = UDP-N-acetyl-alpha-D-glucosamine + diphosphate. It participates in nucleotide-sugar biosynthesis; UDP-N-acetyl-alpha-D-glucosamine biosynthesis; N-acetyl-alpha-D-glucosamine 1-phosphate from alpha-D-glucosamine 6-phosphate (route II): step 2/2. The protein operates within nucleotide-sugar biosynthesis; UDP-N-acetyl-alpha-D-glucosamine biosynthesis; UDP-N-acetyl-alpha-D-glucosamine from N-acetyl-alpha-D-glucosamine 1-phosphate: step 1/1. It functions in the pathway bacterial outer membrane biogenesis; LPS lipid A biosynthesis. Its function is as follows. Catalyzes the last two sequential reactions in the de novo biosynthetic pathway for UDP-N-acetylglucosamine (UDP-GlcNAc). The C-terminal domain catalyzes the transfer of acetyl group from acetyl coenzyme A to glucosamine-1-phosphate (GlcN-1-P) to produce N-acetylglucosamine-1-phosphate (GlcNAc-1-P), which is converted into UDP-GlcNAc by the transfer of uridine 5-monophosphate (from uridine 5-triphosphate), a reaction catalyzed by the N-terminal domain. The chain is Bifunctional protein GlmU from Vibrio vulnificus (strain CMCP6).